The primary structure comprises 86 residues: Cell division topological specificity factor (86 aa).

This sequence belongs to the MinE family.

Prevents the cell division inhibition by proteins MinC and MinD at internal division sites while permitting inhibition at polar sites. This ensures cell division at the proper site by restricting the formation of a division septum at the midpoint of the long axis of the cell. The chain is Cell division topological specificity factor from Alteromonas mediterranea (strain DSM 17117 / CIP 110805 / LMG 28347 / Deep ecotype).